The primary structure comprises 224 residues: Deoxyribose-phosphate aldolase (224 aa).

Aspartate 92 functions as the Proton donor/acceptor in the catalytic mechanism. Lysine 154 acts as the Schiff-base intermediate with acetaldehyde in catalysis. Lysine 183 (proton donor/acceptor) is an active-site residue.

This sequence belongs to the DeoC/FbaB aldolase family. DeoC type 1 subfamily.

The protein resides in the cytoplasm. The catalysed reaction is 2-deoxy-D-ribose 5-phosphate = D-glyceraldehyde 3-phosphate + acetaldehyde. It functions in the pathway carbohydrate degradation; 2-deoxy-D-ribose 1-phosphate degradation; D-glyceraldehyde 3-phosphate and acetaldehyde from 2-deoxy-alpha-D-ribose 1-phosphate: step 2/2. Its function is as follows. Catalyzes a reversible aldol reaction between acetaldehyde and D-glyceraldehyde 3-phosphate to generate 2-deoxy-D-ribose 5-phosphate. The sequence is that of Deoxyribose-phosphate aldolase from Actinobacillus succinogenes (strain ATCC 55618 / DSM 22257 / CCUG 43843 / 130Z).